Consider the following 459-residue polypeptide: ATP-dependent protease ATPase subunit HslU (459 aa).

ATP contacts are provided by residues V26, 68-73, D271, E337, and R409; that span reads GVGKTE.

It belongs to the ClpX chaperone family. HslU subfamily. In terms of assembly, a double ring-shaped homohexamer of HslV is capped on each side by a ring-shaped HslU homohexamer. The assembly of the HslU/HslV complex is dependent on binding of ATP.

It is found in the cytoplasm. Its function is as follows. ATPase subunit of a proteasome-like degradation complex; this subunit has chaperone activity. The binding of ATP and its subsequent hydrolysis by HslU are essential for unfolding of protein substrates subsequently hydrolyzed by HslV. HslU recognizes the N-terminal part of its protein substrates and unfolds these before they are guided to HslV for hydrolysis. This is ATP-dependent protease ATPase subunit HslU from Xylella fastidiosa (strain 9a5c).